The chain runs to 469 residues: Putative diacyglycerol O-acyltransferase MT0231 (469 aa).

His139 functions as the Proton acceptor in the catalytic mechanism.

Belongs to the long-chain O-acyltransferase family.

It catalyses the reaction an acyl-CoA + a 1,2-diacyl-sn-glycerol = a triacyl-sn-glycerol + CoA. It participates in glycerolipid metabolism; triacylglycerol biosynthesis. The protein is Putative diacyglycerol O-acyltransferase MT0231 of Mycobacterium tuberculosis (strain CDC 1551 / Oshkosh).